The chain runs to 259 residues: Ribosomal RNA small subunit methyltransferase A (259 aa).

Asn13, Leu15, Gly39, Glu60, Asp84, and Asn101 together coordinate S-adenosyl-L-methionine.

It belongs to the class I-like SAM-binding methyltransferase superfamily. rRNA adenine N(6)-methyltransferase family. RsmA subfamily.

It localises to the cytoplasm. The enzyme catalyses adenosine(1518)/adenosine(1519) in 16S rRNA + 4 S-adenosyl-L-methionine = N(6)-dimethyladenosine(1518)/N(6)-dimethyladenosine(1519) in 16S rRNA + 4 S-adenosyl-L-homocysteine + 4 H(+). Its function is as follows. Specifically dimethylates two adjacent adenosines (A1518 and A1519) in the loop of a conserved hairpin near the 3'-end of 16S rRNA in the 30S particle. May play a critical role in biogenesis of 30S subunits. In Mesomycoplasma hyopneumoniae (strain J / ATCC 25934 / NCTC 10110) (Mycoplasma hyopneumoniae), this protein is Ribosomal RNA small subunit methyltransferase A.